We begin with the raw amino-acid sequence, 259 residues long: Protein unc-50 homolog B (259 aa).

A compositionally biased stretch (polar residues) spans 1–11 (MLPTTSVSPRS). The interval 1–21 (MLPTTSVSPRSPDNGILSPRD) is disordered. The Cytoplasmic portion of the chain corresponds to 1–82 (MLPTTSVSPR…TKDQWARDDP (82 aa)). Residues 83–103 (AFLVLLGIWLCVSTVGFGFVL) traverse the membrane as a helical segment. Residues 104 to 109 (DMSFFE) are Lumenal-facing. Residues 110–130 (TFTLLLWVVFIDCVGVGLLIA) form a helical membrane-spanning segment. Topologically, residues 131–158 (TSMWFVSNKYMVNRQGKDYDVEWGYTFD) are cytoplasmic. A helical transmembrane segment spans residues 159 to 179 (VHLNAFYPLLVILHFIQLFFI). The Lumenal portion of the chain corresponds to 180–181 (NH). A helical transmembrane segment spans residues 182–202 (VILTGWFIGCFVGNTLWLIAI). At 203-222 (GYYIYITFLGYSALPFLKNT) the chain is on the cytoplasmic side. Residues 223-243 (VVLLYPFAALALLYILSLALG) traverse the membrane as a helical segment. Topologically, residues 244 to 259 (WNFTAKLCLFYKYRVR) are lumenal.

It belongs to the unc-50 family.

Its subcellular location is the nucleus inner membrane. The protein resides in the golgi apparatus membrane. Its function is as follows. Involved in the cell surface expression of neuronal nicotinic receptors. Binds RNA. In Xenopus laevis (African clawed frog), this protein is Protein unc-50 homolog B (unc50-b).